The primary structure comprises 390 residues: Transposase for insertion sequence element IS256 in transposon Tn4001 (390 aa).

This sequence belongs to the transposase mutator family.

Its function is as follows. Required for the transposition of the insertion element. The polypeptide is Transposase for insertion sequence element IS256 in transposon Tn4001 (Enterococcus faecalis (strain ATCC 700802 / V583)).